We begin with the raw amino-acid sequence, 701 residues long: Interleukin-1 receptor accessory protein-like 1-A (701 aa).

Residues 1 to 19 form the signal peptide; it reads MTALNPVLFLLCGVSVSLS. Topologically, residues 20-361 are extracellular; the sequence is LKVVSKRGSV…IGKRVELMYT (342 aa). Residues 33-133 form the Ig-like C2-type 1 domain; it reads TDWSVDYLKY…RNSTFCMKVS (101 aa). C54 and C121 are disulfide-bonded. N-linked (GlcNAc...) asparagine glycans are attached at residues N64, N125, N141, N216, N267, and N334. 2 Ig-like C2-type domains span residues 146–235 and 245–353; these read CYNS…TYLS and PRIL…VQIG. C167 and C219 are disulfide-bonded. Cysteines 270 and 337 form a disulfide. Residues 362 to 382 traverse the membrane as a helical segment; the sequence is VELAGGLGAILLLLALLLSVY. The Cytoplasmic segment spans residues 383–701; the sequence is KCYRIELLLC…RETSISSVIW (319 aa). One can recognise a TIR domain in the interval 407 to 563; it reads KEYDAYLSYS…RFWKQLRYTM (157 aa). The active site involves E495. Positions 568 to 701 are required for synaptic vesicle accumulation during synaptogenesis; sequence PQQTITNHAL…RETSISSVIW (134 aa).

It belongs to the interleukin-1 receptor family.

The protein localises to the cell membrane. It is found in the cytoplasm. It catalyses the reaction NAD(+) + H2O = ADP-D-ribose + nicotinamide + H(+). Functionally, may regulate secretion and presynaptic differentiation through inhibition of the activity of N-type voltage-gated calcium channel. During presynaptic differentiation may regulate both synaptic vesicle accumulation in axon terminals and subsequent axon terminal remodeling. The sequence is that of Interleukin-1 receptor accessory protein-like 1-A (il1rapl1a) from Danio rerio (Zebrafish).